Consider the following 728-residue polypeptide: Elongation factor 2 (728 aa).

In terms of domain architecture, tr-type G spans 18 to 258 (KFIRNIGIVA…MVIRHLPSPI (241 aa)). GTP is bound by residues 27-34 (AHIDHGKT), 93-97 (DTPGH), and 147-150 (NKVD). H594 carries the diphthamide modification.

The protein belongs to the TRAFAC class translation factor GTPase superfamily. Classic translation factor GTPase family. EF-G/EF-2 subfamily.

It localises to the cytoplasm. Its function is as follows. Catalyzes the GTP-dependent ribosomal translocation step during translation elongation. During this step, the ribosome changes from the pre-translocational (PRE) to the post-translocational (POST) state as the newly formed A-site-bound peptidyl-tRNA and P-site-bound deacylated tRNA move to the P and E sites, respectively. Catalyzes the coordinated movement of the two tRNA molecules, the mRNA and conformational changes in the ribosome. In Archaeoglobus fulgidus (strain ATCC 49558 / DSM 4304 / JCM 9628 / NBRC 100126 / VC-16), this protein is Elongation factor 2 (fusA).